The chain runs to 200 residues: ATP-dependent Clp protease proteolytic subunit 1 (200 aa).

Catalysis depends on serine 98, which acts as the Nucleophile. Residue histidine 123 is part of the active site.

Belongs to the peptidase S14 family. Fourteen ClpP subunits assemble into 2 heptameric rings which stack back to back to give a disk-like structure with a central cavity, resembling the structure of eukaryotic proteasomes.

It localises to the cytoplasm. It carries out the reaction Hydrolysis of proteins to small peptides in the presence of ATP and magnesium. alpha-casein is the usual test substrate. In the absence of ATP, only oligopeptides shorter than five residues are hydrolyzed (such as succinyl-Leu-Tyr-|-NHMec, and Leu-Tyr-Leu-|-Tyr-Trp, in which cleavage of the -Tyr-|-Leu- and -Tyr-|-Trp bonds also occurs).. In terms of biological role, cleaves peptides in various proteins in a process that requires ATP hydrolysis. Has a chymotrypsin-like activity. Plays a major role in the degradation of misfolded proteins. This Mycobacterium leprae (strain TN) protein is ATP-dependent Clp protease proteolytic subunit 1.